Consider the following 478-residue polypeptide: Adenosylhomocysteinase (478 aa).

Substrate contacts are provided by Thr-67, Asp-144, and Glu-204. 205-207 serves as a coordination point for NAD(+); the sequence is TTT. Residues Lys-234 and Asp-238 each coordinate substrate. Residues Asn-239, 268-273, Glu-291, Asn-326, 347-349, and Asn-392 contribute to the NAD(+) site; these read GYGDVG and IGH.

This sequence belongs to the adenosylhomocysteinase family. NAD(+) serves as cofactor.

It localises to the cytoplasm. It carries out the reaction S-adenosyl-L-homocysteine + H2O = L-homocysteine + adenosine. It participates in amino-acid biosynthesis; L-homocysteine biosynthesis; L-homocysteine from S-adenosyl-L-homocysteine: step 1/1. Functionally, may play a key role in the regulation of the intracellular concentration of adenosylhomocysteine. This Nitrosomonas europaea (strain ATCC 19718 / CIP 103999 / KCTC 2705 / NBRC 14298) protein is Adenosylhomocysteinase.